The primary structure comprises 335 residues: Glycerol-3-phosphate dehydrogenase [NAD(P)+] (335 aa).

NADPH is bound by residues serine 12, tryptophan 13, arginine 33, arginine 34, and lysine 107. Residues lysine 107, glycine 134, and serine 136 each contribute to the sn-glycerol 3-phosphate site. Alanine 138 is a binding site for NADPH. Sn-glycerol 3-phosphate-binding residues include lysine 189, aspartate 242, serine 252, arginine 253, and asparagine 254. Lysine 189 serves as the catalytic Proton acceptor. Arginine 253 contributes to the NADPH binding site. Valine 277 and glutamate 279 together coordinate NADPH.

The protein belongs to the NAD-dependent glycerol-3-phosphate dehydrogenase family.

Its subcellular location is the cytoplasm. The enzyme catalyses sn-glycerol 3-phosphate + NAD(+) = dihydroxyacetone phosphate + NADH + H(+). It carries out the reaction sn-glycerol 3-phosphate + NADP(+) = dihydroxyacetone phosphate + NADPH + H(+). Its pathway is membrane lipid metabolism; glycerophospholipid metabolism. Its function is as follows. Catalyzes the reduction of the glycolytic intermediate dihydroxyacetone phosphate (DHAP) to sn-glycerol 3-phosphate (G3P), the key precursor for phospholipid synthesis. The protein is Glycerol-3-phosphate dehydrogenase [NAD(P)+] of Moorella thermoacetica (strain ATCC 39073 / JCM 9320).